The primary structure comprises 465 residues: MTNTTQDKKLWGGRFAEATDGLVELFNASVAFDQRLAEQDIRGSLAHVAMLGQTGILTPDEVAQIEEGLQGILADIRAGRFDWRLDREDVHMNVEAALRDRIGPVAGKLHTARSRNDQVAVDFRLFTKEAALDLAAKVRALRAVLVAEAEKHLQDEVILPGYTHLQVAQPILLSHWLMAYAAMLERDEGRFRDAAERMDESPLGSSALAGTPWPIDRFATAAALGFARPTANSLDGVGSRDFALEFLSACAILAAHLSRLSEELILYSTFEFGFLTLPDSHTTGSSIMPQKKNPDVAELARGKAGRVFGNLMGLLTVVKGTPLAYNKDLQEDKEGVFDSYDTLSIVLRLYADMLPKTVWHADVTKLAAARGFSTATDLADFLARSGVPFREAHEVVGRLVGLASRTGRQLWDLTDEELRAAHPLLSAEVARALTVEESVKSRRSYGGTAPERVREQVAAAKAALS.

It belongs to the lyase 1 family. Argininosuccinate lyase subfamily.

The protein resides in the cytoplasm. The enzyme catalyses 2-(N(omega)-L-arginino)succinate = fumarate + L-arginine. It participates in amino-acid biosynthesis; L-arginine biosynthesis; L-arginine from L-ornithine and carbamoyl phosphate: step 3/3. This chain is Argininosuccinate lyase, found in Deinococcus geothermalis (strain DSM 11300 / CIP 105573 / AG-3a).